A 507-amino-acid chain; its full sequence is Maturase K (507 aa).

It belongs to the intron maturase 2 family. MatK subfamily.

It localises to the plastid. Its subcellular location is the chloroplast. Functionally, usually encoded in the trnK tRNA gene intron. Probably assists in splicing its own and other chloroplast group II introns. In Liriodendron tulipifera (Tuliptree), this protein is Maturase K.